A 265-amino-acid chain; its full sequence is MRIGLFDSGIGGFTVLKKVIKLCPNNSFIYLADTARLPYGIKTTNEIKKIAEEISSWFRYQKIDAFLVACNTTNAIALDILKKNLDIPVFDLIGSAASTIQESRVGVLATPSTVKTKAYTNAILEFKPKTFVIEQPCPAFVPMIEMDNINSDDITDVATGYLQPLLKQKIHSLILGCSHYPLIAPSLRKVLPSSVKLIDPAEALSFKLKLFIDSKTSNYSKNKNFVDLKFYVTSNLKHFPNKAKHWLNVFPEVNLVSLQKKGWVS.

Residues 7–8 (DS) and 39–40 (YG) contribute to the substrate site. Catalysis depends on C70, which acts as the Proton donor/acceptor. 71-72 (NT) is a substrate binding site. C177 (proton donor/acceptor) is an active-site residue.

It belongs to the aspartate/glutamate racemases family.

The catalysed reaction is L-glutamate = D-glutamate. The protein operates within cell wall biogenesis; peptidoglycan biosynthesis. In terms of biological role, provides the (R)-glutamate required for cell wall biosynthesis. This Prochlorococcus marinus (strain NATL2A) protein is Glutamate racemase.